The chain runs to 135 residues: Holo-[acyl-carrier-protein] synthase (135 aa).

The Mg(2+) site is built by Asp9 and Glu63.

This sequence belongs to the P-Pant transferase superfamily. AcpS family. Mg(2+) is required as a cofactor.

It localises to the cytoplasm. It carries out the reaction apo-[ACP] + CoA = holo-[ACP] + adenosine 3',5'-bisphosphate + H(+). Its function is as follows. Transfers the 4'-phosphopantetheine moiety from coenzyme A to a Ser of acyl-carrier-protein. The polypeptide is Holo-[acyl-carrier-protein] synthase (Paraburkholderia phymatum (strain DSM 17167 / CIP 108236 / LMG 21445 / STM815) (Burkholderia phymatum)).